A 197-amino-acid chain; its full sequence is Xanthine phosphoribosyltransferase (197 aa).

Xanthine is bound by residues Leu20 and Asn27. 128–132 (ANGQA) contributes to the 5-phospho-alpha-D-ribose 1-diphosphate binding site. Lys156 contacts xanthine.

The protein belongs to the purine/pyrimidine phosphoribosyltransferase family. Xpt subfamily. As to quaternary structure, homodimer.

The protein resides in the cytoplasm. It catalyses the reaction XMP + diphosphate = xanthine + 5-phospho-alpha-D-ribose 1-diphosphate. It functions in the pathway purine metabolism; XMP biosynthesis via salvage pathway; XMP from xanthine: step 1/1. Converts the preformed base xanthine, a product of nucleic acid breakdown, to xanthosine 5'-monophosphate (XMP), so it can be reused for RNA or DNA synthesis. The polypeptide is Xanthine phosphoribosyltransferase (Bacillus cereus (strain ZK / E33L)).